Reading from the N-terminus, the 761-residue chain is Probable ubiquitin carboxyl-terminal hydrolase creB (761 aa).

Residues 1–45 (MGSFLRSFRHNGGSTAPSVGAVPAKKEPQPPPMTPLEKRLLDMGP) form a disordered region. Positions 36-45 (LEKRLLDMGP) are enriched in basic and acidic residues. One can recognise a USP domain in the interval 55-468 (YGMENYGNTC…CAYVLFYQET (414 aa)). Catalysis depends on cysteine 64, which acts as the Nucleophile. 2 disordered regions span residues 113 to 146 (EAEA…DSPE) and 242 to 269 (PLME…KTPN). Over residues 256–269 (SVDQSSSTGSKTPN) the composition is skewed to polar residues. Histidine 419 functions as the Proton acceptor in the catalytic mechanism. The segment at 496 to 761 (LKQNGFPQSP…LRKKSFSILS (266 aa)) is disordered. Residues 555–566 (PLSPVPPVPPIP) show a composition bias toward pro residues. A coiled-coil region spans residues 577–640 (KNDALAKREE…ASKAEEDRRL (64 aa)). Over residues 580-649 (ALAKREEKER…LSTENGKEKQ (70 aa)) the composition is skewed to basic and acidic residues. The segment covering 655-666 (RLKRGSKSLSHR) has biased composition (basic residues). A compositionally biased stretch (low complexity) spans 692-710 (SQSGPTSEQQQQQRQQSPP). Over residues 712-722 (HDQPPNSPQPG) the composition is skewed to pro residues. Positions 725–743 (TIREDEQVNHKDSKHERTG) are enriched in basic and acidic residues. The span at 744 to 761 (HGKWRSFSLRKKSFSILS) shows a compositional bias: basic residues.

This sequence belongs to the peptidase C19 family. In terms of assembly, interacts with creA, creC and qutD.

The catalysed reaction is Thiol-dependent hydrolysis of ester, thioester, amide, peptide and isopeptide bonds formed by the C-terminal Gly of ubiquitin (a 76-residue protein attached to proteins as an intracellular targeting signal).. In terms of biological role, ubiquitin thioesterase component of the regulatory network controlling carbon source utilization through ubiquitination and deubiquitination involving creA, creB, creC, creD and acrB. Deubiquitinates the creA catabolic repressor and the quinate permease qutD. Also plays a role in response to carbon starvation and the control of extracellular proteases activity. This Neosartorya fischeri (strain ATCC 1020 / DSM 3700 / CBS 544.65 / FGSC A1164 / JCM 1740 / NRRL 181 / WB 181) (Aspergillus fischerianus) protein is Probable ubiquitin carboxyl-terminal hydrolase creB (creB).